The primary structure comprises 237 residues: Pyridoxal 5'-phosphate synthase subunit PdxS (237 aa).

Residue Lys19 is the Schiff-base intermediate with D-ribose 5-phosphate of the active site. A D-ribose 5-phosphate-binding site is contributed by Gly91. Arg103 lines the D-glyceraldehyde 3-phosphate pocket. Residues Gly157 and 178 to 179 (GS) contribute to the D-ribose 5-phosphate site.

Belongs to the PdxS/SNZ family. In the presence of PdxT, forms a dodecamer of heterodimers.

The enzyme catalyses aldehydo-D-ribose 5-phosphate + D-glyceraldehyde 3-phosphate + L-glutamine = pyridoxal 5'-phosphate + L-glutamate + phosphate + 3 H2O + H(+). Its pathway is cofactor biosynthesis; pyridoxal 5'-phosphate biosynthesis. Its function is as follows. Catalyzes the formation of pyridoxal 5'-phosphate from ribose 5-phosphate (RBP), glyceraldehyde 3-phosphate (G3P) and ammonia. The ammonia is provided by the PdxT subunit. Can also use ribulose 5-phosphate and dihydroxyacetone phosphate as substrates, resulting from enzyme-catalyzed isomerization of RBP and G3P, respectively. The sequence is that of Pyridoxal 5'-phosphate synthase subunit PdxS from Methanococcus vannielii.